Reading from the N-terminus, the 157-residue chain is LEATVSRNKKYKFTMGNVVRSWKCTVENKSNKTLYADGSTPVSGSMATVLTDIAPGGTGVFLWEQSKGAARGAVGVVYYRYEDKILSLMASIPYDWHLYNAWANARVSNKKESFSNLYNGYDGAQQPTIAGNWGEVDGTKFFLTDKSHAEFNVIFSG.

Residues Leu1–Thr14 form the signal peptide. Positions Ile129–Gly131 match the Cell attachment site motif.

Belongs to the actinoporin family. HALT subfamily. Octamer or nonamer in membranes. Monomer in the soluble state. In vitro, interacts with folate receptor alpha (of target organism).

The protein localises to the nematocyst. It localises to the secreted. The protein resides in the target cell membrane. In terms of biological role, pore-forming protein that forms hydrophilic pores and causes cytolysis. Compared to equinatoxin-2 (AC P61914), it reveals lower cytolysis activity (5-12-fold difference, tested on erythrocytes), a larger pore size (probably 2-3 nm) and different affinity to membrane lipids (100-fold lower affinity to sphingomyelin). Binds to the two sphingolipids, lysophosphatidic acid (LPA) and sphingosine-1-phosphate (S1P). Does not bind (or only weakly) to sulfatides (SFT). Shows cytolytic activity on HeLa cells, with a different potency than its paralogs (from most potent to less potent: HALT-4&gt;HALT-6~HALT-1&gt;HALT-3&gt;HALT-7&gt;HALT-2). Pore formation is a multi-step process that involves specific recognition of membrane lipid by a protein aromatic residues rich region, firm binding to the membrane (mainly driven by hydrophobic interactions) accompanied by the transfer of the N-terminal region to the lipid-water interface and finally pore formation after oligomerization of monomers. In vitro, binds to the folate receptor alpha (FOLR1), a GPI-anchored membrane protein that plays a major role in the uptake of folate/folic acid into cells via endocytosis, suggesting a possible involvement of this receptor in the mechanism of HALT-1-induced cell lysis. In vivo, does not cause visible paralysis in larvae of the blowfly Sarcophaga faculata, the most common arthropod prey of Hydra. The sequence is that of Hydra actinoporin-like toxin 3 from Hydra vulgaris (Hydra).